The sequence spans 247 residues: Probable chemoreceptor glutamine deamidase CheD (247 aa).

Residues 204-247 (KRPAAPQPARPRIELFGGRGTTPGAGSQAAGSPYAANLSRKQEA) are disordered.

The protein belongs to the CheD family.

The catalysed reaction is L-glutaminyl-[protein] + H2O = L-glutamyl-[protein] + NH4(+). Its function is as follows. Probably deamidates glutamine residues to glutamate on methyl-accepting chemotaxis receptors (MCPs), playing an important role in chemotaxis. In Burkholderia orbicola (strain MC0-3), this protein is Probable chemoreceptor glutamine deamidase CheD.